Consider the following 559-residue polypeptide: Transcription factor tstO (559 aa).

The zn(2)-C6 fungal-type DNA-binding region spans Cys-23–Cys-50. 2 disordered regions span residues Gly-166–Ser-316 and Ala-453–Ala-477. Over residues Ser-222–Ser-232 the composition is skewed to low complexity. A compositionally biased stretch (polar residues) spans Thr-255–Ser-267. The span at Ile-268 to Phe-279 shows a compositional bias: basic and acidic residues. Low complexity-rich tracts occupy residues Ser-286–Ser-316 and Asn-462–Ala-477.

The protein resides in the nucleus. Functionally, transcription factore; part of the gene cluster that mediates the biosynthesis of the antihypercholesterolemic agents phomoidrides which are dimeric anhydrides. Probably regulates the expression of the genes from the cluster. This is Transcription factor tstO from Talaromyces stipitatus (strain ATCC 10500 / CBS 375.48 / QM 6759 / NRRL 1006) (Penicillium stipitatum).